A 525-amino-acid polypeptide reads, in one-letter code: GMP synthase [glutamine-hydrolyzing] (525 aa).

The Glutamine amidotransferase type-1 domain maps to 13–202; the sequence is TILVLDFGSQ…AVDLCHAKQN (190 aa). Cys89 functions as the Nucleophile in the catalytic mechanism. Catalysis depends on residues His176 and Glu178. Residues 203–400 form the GMPS ATP-PPase domain; sequence WTMKNFIGTE…LGISHELVWR (198 aa). 231–237 serves as a coordination point for ATP; that stretch reads SGGVDST. Arg304, Asp462, Lys517, and Glu523 together coordinate XMP.

Homodimer. Mg(2+) serves as cofactor.

It localises to the cytoplasm. Its subcellular location is the cytosol. The catalysed reaction is XMP + L-glutamine + ATP + H2O = GMP + L-glutamate + AMP + diphosphate + 2 H(+). It participates in purine metabolism; GMP biosynthesis; GMP from XMP (L-Gln route): step 1/1. Catalyzes the conversion of xanthine monophosphate (XMP) to GMP in the presence of glutamine and ATP through an adenyl-XMP intermediate. The protein is GMP synthase [glutamine-hydrolyzing] (GUA1) of Candida glabrata (strain ATCC 2001 / BCRC 20586 / JCM 3761 / NBRC 0622 / NRRL Y-65 / CBS 138) (Yeast).